Consider the following 318-residue polypeptide: NADH-ubiquinone oxidoreductase chain 1 (318 aa).

8 consecutive transmembrane segments (helical) span residues 3–23 (FMNL…LTLL), 69–89 (VLFI…WIPL), 102–122 (ILFM…SGWA), 146–166 (LAII…STLI), 171–191 (HIWL…STLA), 222–242 (LFFL…IILF), 253–273 (ELYT…FLWV), and 294–314 (LPLT…LAGI).

This sequence belongs to the complex I subunit 1 family. Core subunit of respiratory chain NADH dehydrogenase (Complex I) which is composed of 45 different subunits.

Its subcellular location is the mitochondrion inner membrane. It catalyses the reaction a ubiquinone + NADH + 5 H(+)(in) = a ubiquinol + NAD(+) + 4 H(+)(out). Its function is as follows. Core subunit of the mitochondrial membrane respiratory chain NADH dehydrogenase (Complex I) which catalyzes electron transfer from NADH through the respiratory chain, using ubiquinone as an electron acceptor. Essential for the catalytic activity and assembly of complex I. The polypeptide is NADH-ubiquinone oxidoreductase chain 1 (MT-ND1) (Cnephaeus nilssonii (Northern bat)).